The chain runs to 101 residues: Small ribosomal subunit protein uS14A (101 aa).

Residues 28 to 57 (KDIIRSPSSAPEQRSTAQRALARQPRDASP) are disordered. Polar residues predominate over residues 33–45 (SPSSAPEQRSTAQ).

This sequence belongs to the universal ribosomal protein uS14 family. Part of the 30S ribosomal subunit. Contacts proteins S3 and S10.

Its function is as follows. Binds 16S rRNA, required for the assembly of 30S particles and may also be responsible for determining the conformation of the 16S rRNA at the A site. This chain is Small ribosomal subunit protein uS14A, found in Mycobacterium bovis (strain ATCC BAA-935 / AF2122/97).